Consider the following 314-residue polypeptide: Olfactory receptor 5G29 (314 aa).

Residues 1–25 are Extracellular-facing; the sequence is MEEKNQTIVMEFFFLGLTDHLYQKI. An N-linked (GlcNAc...) asparagine glycan is attached at Asn5. The helical transmembrane segment at 26–46 threads the bilayer; the sequence is ALFITILFVYLVTLGGNLGMI. The Cytoplasmic portion of the chain corresponds to 47–54; that stretch reads TLIWADPR. A helical membrane pass occupies residues 55-75; the sequence is LHTPMYFFLSHLSFVDMCSSS. Over 76–99 the chain is Extracellular; the sequence is SIAPKMLCDIFAEEKRISFMGCAA. Cys97 and Cys189 are disulfide-bonded. Residues 100 to 120 form a helical membrane-spanning segment; that stretch reads QMWFFGFFVGTECFLLASMAY. Residues 121-133 lie on the Cytoplasmic side of the membrane; sequence DRYTAICKPLLYT. Residues 134–154 traverse the membrane as a helical segment; the sequence is LLMSQRVCVHLVVGPYVFAII. Topologically, residues 155 to 196 are extracellular; sequence NITTHTTLAFCLPFCGSNTINHFFCDVSPLLSLACADSWVNK. A helical membrane pass occupies residues 197-217; it reads VVLFVLSGAIGVFSGLIIIVS. The Cytoplasmic portion of the chain corresponds to 218-237; sequence YVSILMTIFKIQTADGKQKA. A helical membrane pass occupies residues 238–258; that stretch reads FSTCSSHLSAVSILYGTLFFI. At 259 to 271 the chain is on the extracellular side; the sequence is YVRPSASFSLNIN. The chain crosses the membrane as a helical span at residues 272–292; the sequence is KMISLFYTVVIPMLNPLIYSL. Topologically, residues 293-312 are cytoplasmic; sequence RNKEVKGAFRRKVQKKHFPA.

Belongs to the G-protein coupled receptor 1 family.

It localises to the cell membrane. Its function is as follows. Potential odorant receptor. This is Olfactory receptor 5G29 from Mus musculus (Mouse).